A 264-amino-acid polypeptide reads, in one-letter code: MTVHKSRIRRSRSLSVTHRIQKRPDHREKTKLYLQLKLHDLHTVFNLFPEYEQKFLAIIKLPITGKEPIDVPFSLSNHHQHTCLEFSPYANEQISKSACLHCESVSVPTSSDAMVAHLNQVNNVMQNRLYFYGFRKDMELIRMSAKQPTIFQIFYIVHNTINNIFPIMFERKQKLGMHIVFQSRTLHIPCECIKQIVAVSSGYNVYLDILQESVILTVLCETLDTNTNIHIDIGMLQKKLEEMDIPNEISDRLEKYKGHLIGFH.

Positions 1–12 (MTVHKSRIRRSR) are enriched in basic residues. Positions 1–22 (MTVHKSRIRRSRSLSVTHRIQK) are disordered. The CCCH-type zinc finger occupies 83–187 (CLEFSPYANE…HIVFQSRTLH (105 aa)).

Belongs to the herpesviridae NEC1 protein family. As to quaternary structure, forms a heterohexameric complex with NEC2. Interacts with capsid vertex specific component 2/CVC2; this interaction directs the capsid to the host inner nuclear membrane to initiate budding. In terms of processing, phosphorylated at serine residues in the N-terminus. This phosphorylation regulates the localization within the inner nuclear membrane.

The protein localises to the host nucleus inner membrane. Plays an essential role in virion nuclear egress, the first step of virion release from infected cell. Within the host nucleus, NEC1 interacts with the newly formed capsid through the vertexes and directs it to the inner nuclear membrane by associating with NEC2. Induces the budding of the capsid at the inner nuclear membrane as well as its envelopment into the perinuclear space. There, the NEC1/NEC2 complex promotes the fusion of the enveloped capsid with the outer nuclear membrane and the subsequent release of the viral capsid into the cytoplasm where it will reach the secondary budding sites in the host Golgi or trans-Golgi network. In Human herpesvirus 6A (strain Uganda-1102) (HHV-6 variant A), this protein is Nuclear egress protein 1.